Consider the following 568-residue polypeptide: Phosphoprotein (568 aa).

Residues methionine 1–leucine 25 are disordered. A compositionally biased stretch (basic and acidic residues) spans phenylalanine 7–serine 24. Residues aspartate 33–threonine 41 form an N0 binding region. A disordered region spans residues aspartate 55–asparagine 322. Composition is skewed to basic and acidic residues over residues asparagine 56 to isoleucine 105, arginine 132 to arginine 144, proline 151 to glutamate 167, and glutamate 175 to arginine 190. Polar residues predominate over residues threonine 191–serine 216. The span at threonine 239–threonine 265 shows a compositional bias: basic and acidic residues. Over residues tyrosine 294 to lysine 304 the composition is skewed to low complexity. The multimerization stretch occupies residues phenylalanine 344–serine 411. Residues glutamate 387–glutamate 416 adopt a coiled-coil conformation. A l protein binding region spans residues glutamate 412–threonine 445. Disordered regions lie at residues arginine 434–lysine 455 and valine 494–serine 513. Residues proline 441–valine 450 are compositionally biased toward polar residues. An interaction with the nucleocapsid (N-RNA) region spans residues aspartate 479–asparagine 568.

The protein belongs to the respirovirus P protein family. Homotetramer. Interacts (via multimerization domain) with polymerase L; this interaction forms the polymerase complex. Interacts (via N-terminus) with N0; this interaction allows P to chaperon N0 before encapsidation and form the N-P complex. Interacts (via C-terminus) with N-RNA template; this interaction positions the polymerase on the template.

In terms of biological role, essential cofactor of the RNA polymerase L that plays a central role in the transcription and replication by forming the polymerase complex with RNA polymerase L and recruiting L to the genomic N-RNA template for RNA synthesis. Also plays a central role in the encapsidation of nascent RNA chains by forming the encapsidation complex with the nucleocapsid protein N (N-P complex). Acts as a chaperone for newly synthesized free N protein, so-called N0, allowing encapsidation of nascent RNA chains during replication. The nucleoprotein protein N prevents excessive phosphorylation of P, which leads to down-regulation of viral transcription/ replication. Participates, together with N, in the formation of viral factories (viroplasms), which are large inclusions in the host cytoplasm where replication takes place. Recruits host PI4KB and remodel the host endoplasmic reticulum membrane to form viral replication factories. This Human parainfluenza 1 virus (strain CI-5/73) (HPIV-1) protein is Phosphoprotein (P/C).